Consider the following 569-residue polypeptide: 2-succinyl-5-enolpyruvyl-6-hydroxy-3-cyclohexene-1-carboxylate synthase (569 aa).

This sequence belongs to the TPP enzyme family. MenD subfamily. In terms of assembly, homodimer. It depends on Mg(2+) as a cofactor. Requires Mn(2+) as cofactor. Thiamine diphosphate is required as a cofactor.

It catalyses the reaction isochorismate + 2-oxoglutarate + H(+) = 5-enolpyruvoyl-6-hydroxy-2-succinyl-cyclohex-3-ene-1-carboxylate + CO2. It functions in the pathway quinol/quinone metabolism; 1,4-dihydroxy-2-naphthoate biosynthesis; 1,4-dihydroxy-2-naphthoate from chorismate: step 2/7. The protein operates within quinol/quinone metabolism; menaquinone biosynthesis. In terms of biological role, catalyzes the thiamine diphosphate-dependent decarboxylation of 2-oxoglutarate and the subsequent addition of the resulting succinic semialdehyde-thiamine pyrophosphate anion to isochorismate to yield 2-succinyl-5-enolpyruvyl-6-hydroxy-3-cyclohexene-1-carboxylate (SEPHCHC). This chain is 2-succinyl-5-enolpyruvyl-6-hydroxy-3-cyclohexene-1-carboxylate synthase, found in Shewanella halifaxensis (strain HAW-EB4).